Consider the following 122-residue polypeptide: Serum amyloid A-2 protein (122 aa).

Residues 1 to 19 (MKLLTSLVFCSLLLGVCHG) form the signal peptide. Basic and acidic residues predominate over residues 89–108 (RGHEDTMADQEANRHGRSGK). Positions 89–122 (RGHEDTMADQEANRHGRSGKDPNYYRPPGLPAKY) are disordered.

Belongs to the SAA family. In terms of assembly, apolipoprotein of the HDL complex. As to expression, expressed by the liver; secreted in plasma.

Its subcellular location is the secreted. In terms of biological role, major acute phase reactant. This is Serum amyloid A-2 protein from Mus musculus (Mouse).